Consider the following 147-residue polypeptide: Lysozyme C-1 (147 aa).

Positions 1 to 18 are cleaved as a signal peptide; it reads MKALIILGFLFLSVAVQG. A C-type lysozyme domain is found at 19 to 147; that stretch reads KVFERCELAR…VSSYVEGCTL (129 aa). 4 disulfides stabilise this stretch: Cys24/Cys145, Cys48/Cys133, Cys83/Cys99, and Cys95/Cys113. Catalysis depends on residues Glu53 and Asp71.

This sequence belongs to the glycosyl hydrolase 22 family. Monomer. In terms of tissue distribution, stomach-specific.

The catalysed reaction is Hydrolysis of (1-&gt;4)-beta-linkages between N-acetylmuramic acid and N-acetyl-D-glucosamine residues in a peptidoglycan and between N-acetyl-D-glucosamine residues in chitodextrins.. In terms of biological role, lysozymes have primarily a bacteriolytic function; those in tissues and body fluids are associated with the monocyte-macrophage system and enhance the activity of immunoagents. In Bos taurus (Bovine), this protein is Lysozyme C-1 (LYZ1).